A 160-amino-acid polypeptide reads, in one-letter code: V-type proton ATPase subunit c (160 aa).

Topologically, residues Met1–Pro6 are lumenal. Residues Val7–Gly27 form a helical membrane-spanning segment. Residues Ala28–Asn53 are Cytoplasmic-facing. The chain crosses the membrane as a helical span at residues Val54–Val74. Topologically, residues Ser75–Gln90 are lumenal. The helical transmembrane segment at Leu91–Val111 threads the bilayer. At Gly112 to Met129 the chain is on the cytoplasmic side. The helical transmembrane segment at Ile130–Leu150 threads the bilayer. The Lumenal segment spans residues Asn151 to Cys160.

It belongs to the V-ATPase proteolipid subunit family. V-ATPase is a heteromultimeric enzyme composed of a peripheral catalytic V1 complex (components A to H) attached to an integral membrane V0 proton pore complex (components: a, c, c', c'', d, e, f and VOA1). The decameric c-ring forms the proton-conducting pore, and is composed of eight proteolipid subunits c, one subunit c' and one subunit c''.

It localises to the vacuole membrane. Its function is as follows. Proton-conducting pore forming subunit of the V0 complex of vacuolar(H+)-ATPase (V-ATPase), a multisubunit enzyme composed of a peripheral complex (V1) that hydrolyzes ATP and a membrane integral complex (V0) that translocates protons. V-ATPase is responsible for acidifying and maintaining the pH of intracellular compartments. The protein is V-type proton ATPase subunit c (VMA3) of Candida tropicalis (Yeast).